The sequence spans 142 residues: HTH-type transcriptional regulator MntR (142 aa).

An HTH dtxR-type domain is found at 1 to 63; that stretch reads MPTPSMEDYI…YEKYRGLILT (63 aa). Mn(2+)-binding residues include Asp-8, Glu-11, His-77, Glu-99, Glu-102, and His-103.

It belongs to the DtxR/MntR family. In terms of assembly, homodimer.

Its subcellular location is the cytoplasm. With respect to regulation, DNA binding is strongly activated by Mn(2+). In terms of biological role, central regulator of manganese homeostasis. The polypeptide is HTH-type transcriptional regulator MntR (Listeria innocua serovar 6a (strain ATCC BAA-680 / CLIP 11262)).